Reading from the N-terminus, the 397-residue chain is MKILAAMSGGVDSAVAAARAVDAGHDVTGVHLALSRMPGTLRTGSRGCCTVEDSMDARRAADLLGIPFYVWDFSERFAADVVDDFVAEYQAGRTPNPCMRCNERIKFAALLEKALDLGFDAVCTGHYADVLPGPDGQPELHRAAAWAKDQSYVLGVLTAEQIAHSYFPLGSTPSKAEVRAEAAARGIQVAQKPDSHDICFIPDGDTRGWLADRVGAEPGDILDGEGNAIGTHQGAAAFTVGQRKGLAIGTPAPDGRPRFVLEIRPKDNTVVVGPQEALAIREIAGSSYTWAGTPPTRPDQPFDCDVQIRAHADPVPARAAVSVVDGSMQLVITPRDPLHGVAPGQTAVVYAGTRVLGQVTIDRTVSAVADARPPVRDAGPADAAPAAAALVGATAGE.

ATP-binding positions include A6–S13 and L32. The active-site Nucleophile is C101. C101 and C199 are joined by a disulfide. G125 provides a ligand contact to ATP. The interval K148–Q150 is interaction with tRNA. C199 acts as the Cysteine persulfide intermediate in catalysis.

This sequence belongs to the MnmA/TRMU family.

Its subcellular location is the cytoplasm. It carries out the reaction S-sulfanyl-L-cysteinyl-[protein] + uridine(34) in tRNA + AH2 + ATP = 2-thiouridine(34) in tRNA + L-cysteinyl-[protein] + A + AMP + diphosphate + H(+). Catalyzes the 2-thiolation of uridine at the wobble position (U34) of tRNA, leading to the formation of s(2)U34. The polypeptide is tRNA-specific 2-thiouridylase MnmA (Clavibacter sepedonicus (Clavibacter michiganensis subsp. sepedonicus)).